The following is a 136-amino-acid chain: Small ribosomal subunit protein uS11c (136 aa).

Belongs to the universal ribosomal protein uS11 family. As to quaternary structure, part of the 30S ribosomal subunit.

The protein localises to the plastid. Its subcellular location is the chloroplast. The protein is Small ribosomal subunit protein uS11c of Guizotia abyssinica (Niger).